A 160-amino-acid polypeptide reads, in one-letter code: Transcriptional repressor NrdR (160 aa).

Positions Met-1–Thr-11 are enriched in polar residues. Residues Met-1–Glu-20 form a disordered region. Residues Cys-3–Cys-34 fold into a zinc finger. Residues Leu-49–Asp-139 enclose the ATP-cone domain.

The protein belongs to the NrdR family. The cofactor is Zn(2+).

Functionally, negatively regulates transcription of bacterial ribonucleotide reductase nrd genes and operons by binding to NrdR-boxes. The protein is Transcriptional repressor NrdR of Rhodopseudomonas palustris (strain BisB5).